Here is a 1087-residue protein sequence, read N- to C-terminus: Voltage-gated inwardly rectifying potassium channel KCNH3 (1087 aa).

Residues 1–228 (MPAMRGLLAP…HCGALRATWD (228 aa)) are Cytoplasmic-facing. In terms of domain architecture, PAS spans 18–90 (IATRFDGTHS…QQIRKALDEH (73 aa)). The PAC domain maps to 93 to 145 (FKAELILYRKSGLPFWCLLDVIPIKNEKGEVALFLVSHKDISETKNRGGPDNW). Basic and acidic residues predominate over residues 137–150 (KNRGGPDNWKERGG). The tract at residues 137 to 161 (KNRGGPDNWKERGGGRRRYGRAGSK) is disordered. A helical transmembrane segment spans residues 229-249 (GFILLATLYVAVTVPYSVCVS). Over 250–259 (TAREPSAARG) the chain is Extracellular. Residues 260–280 (PPSVCDLAVEVLFILDIVLNF) form a helical membrane-spanning segment. Over 281–302 (RTTFVSKSGQVVFAPKSICLHY) the chain is Cytoplasmic. A helical membrane pass occupies residues 303-323 (VTTWFLLDVIAALPFDLLHAF). The Extracellular segment spans residues 324 to 331 (KVNVYVGA). A helical; Voltage-sensor membrane pass occupies residues 332-352 (HLLKTVRLLRLLRLLPRLDRY). Residues 353–361 (SQYSAVVLT) lie on the Cytoplasmic side of the membrane. The chain crosses the membrane as a helical span at residues 362–382 (LLMAVFALLAHWVACVWFYIG). Residues 383–456 (QQEIENSESE…GGPSLRSAYI (74 aa)) are Extracellular-facing. A disordered region spans residues 416-436 (SPDGGNSSGQSENCSSSGGGS). Positions 419 to 431 (GGNSSGQSENCSS) are enriched in low complexity. N-linked (GlcNAc...) asparagine glycans are attached at residues N421, N428, and N439. Positions 457-477 (TSLYFALSSLTSVGFGNVSAN) form an intramembrane region, pore-forming. The short motif at 468-473 (SVGFGN) is the Selectivity filter element. Topologically, residues 478–482 (TDTEK) are extracellular. The helical transmembrane segment at 483-503 (IFSICTMLIGALMHAVVFGNV) threads the bilayer. Residues 504–1087 (TAIIQRMYAR…QWTQEEGTGV (584 aa)) are Cytoplasmic-facing. A nucleoside 3',5'-cyclic phosphate is bound at residue 585 to 700 (LFEAASRGCL…FAPRFSRGLR (116 aa)). Disordered stretches follow at residues 733–813 (EKET…LQLP) and 975–1061 (LMAP…PWDP). A compositionally biased stretch (basic residues) spans 776–788 (TAPRPRLGGRGRP).

It belongs to the potassium channel family. H (Eag) (TC 1.A.1.20) subfamily. Kv12.2/KCNH3 sub-subfamily. In terms of assembly, the potassium channel is probably composed of a homo- or heterotetrameric complex of pore-forming alpha subunits that can associate with modulating beta subunits. Interacts with KCNE1 and KCNE3; these interactions regulate KCNH3 trafficking to the plasma membrane and its subsequent voltage-gated potassium channel activity. Post-translationally, N-glycosylated. N-glycosylation mediates traffick to the cell membrane but is not necessary for voltage-gated potassium channel activity. In terms of tissue distribution, highly expressed in adult and embryonic brain, in particular in cerebellum, brain stem, hippocampus, cortex and striatum. Also found in pituitary.

It localises to the cell membrane. The catalysed reaction is K(+)(in) = K(+)(out). Pore-forming (alpha) subunit of a voltage-gated inwardly rectifying potassium channel. Charactherized by a fast rate of activation during depolarization followed by a rapid inactivation at much more depolarized value causing inward rectification due to a C-type inactivation mechanism. Exhibits a rapid recovery from inactivation. The sequence is that of Voltage-gated inwardly rectifying potassium channel KCNH3 from Rattus norvegicus (Rat).